A 213-amino-acid polypeptide reads, in one-letter code: Glycerol-3-phosphate acyltransferase (213 aa).

Transmembrane regions (helical) follow at residues 2–22 (ITIV…GLWI), 52–74 (AGMA…PIIF), 81–100 (PLIF…FAGF), 112–132 (VIFG…FGAL), 143–163 (VTAS…GFIL), and 164–184 (SNYD…IIIR).

This sequence belongs to the PlsY family. In terms of assembly, probably interacts with PlsX.

Its subcellular location is the cell membrane. The catalysed reaction is an acyl phosphate + sn-glycerol 3-phosphate = a 1-acyl-sn-glycero-3-phosphate + phosphate. The protein operates within lipid metabolism; phospholipid metabolism. Catalyzes the transfer of an acyl group from acyl-phosphate (acyl-PO(4)) to glycerol-3-phosphate (G3P) to form lysophosphatidic acid (LPA). This enzyme utilizes acyl-phosphate as fatty acyl donor, but not acyl-CoA or acyl-ACP. The chain is Glycerol-3-phosphate acyltransferase from Streptococcus pneumoniae (strain Hungary19A-6).